Reading from the N-terminus, the 375-residue chain is Aminomethyltransferase (375 aa).

Belongs to the GcvT family. As to quaternary structure, the glycine cleavage system is composed of four proteins: P, T, L and H.

It carries out the reaction N(6)-[(R)-S(8)-aminomethyldihydrolipoyl]-L-lysyl-[protein] + (6S)-5,6,7,8-tetrahydrofolate = N(6)-[(R)-dihydrolipoyl]-L-lysyl-[protein] + (6R)-5,10-methylene-5,6,7,8-tetrahydrofolate + NH4(+). Its function is as follows. The glycine cleavage system catalyzes the degradation of glycine. This chain is Aminomethyltransferase, found in Symbiobacterium thermophilum (strain DSM 24528 / JCM 14929 / IAM 14863 / T).